The primary structure comprises 138 residues: Cysteine desulfuration protein SufE (138 aa).

Residue cysteine 51 is the Cysteine persulfide intermediate of the active site.

This sequence belongs to the SufE family. As to quaternary structure, homodimer. Interacts with SufS.

The protein localises to the cytoplasm. It functions in the pathway cofactor biosynthesis; iron-sulfur cluster biosynthesis. In terms of biological role, participates in cysteine desulfuration mediated by SufS. Cysteine desulfuration mobilizes sulfur from L-cysteine to yield L-alanine and constitutes an essential step in sulfur metabolism for biosynthesis of a variety of sulfur-containing biomolecules. Functions as a sulfur acceptor for SufS, by mediating the direct transfer of the sulfur atom from the S-sulfanylcysteine of SufS, an intermediate product of cysteine desulfuration process. The polypeptide is Cysteine desulfuration protein SufE (Salmonella dublin (strain CT_02021853)).